A 147-amino-acid chain; its full sequence is Phospholipase A2 inhibitor subunit A (147 aa).

The C-type lectin domain occupies 62 to 143 (EICEEAGGHI…DENLLVVCEF (82 aa)). 2 disulfide bridges follow: Cys-64/Cys-141 and Cys-119/Cys-133. The N-linked (GlcNAc...) asparagine glycan is linked to Asn-103.

It belongs to the alpha-type phospholipase A2 inhibitor family. As to quaternary structure, homo- or heterotrimer; homotrimer of PLI-A chains, two PLI-A and one PLI-B chains, one PLI-A and two PLI-B chains, and homotrimer of PLI-B chains (with a ratio of 1:3:3:1). Expressed by the liver.

Its subcellular location is the secreted. In terms of biological role, PLI binds directly phospholipase A2 in the presence or absence of calcium. Inhibitory activity of the PLI-A homotrimer is more specific than that of the PLI-B homotrimer. The protein is Phospholipase A2 inhibitor subunit A of Protobothrops flavoviridis (Habu).